Consider the following 792-residue polypeptide: Chloride channel protein CLC-d (792 aa).

Transmembrane regions (helical) follow at residues 78 to 98 (FFSL…NLSV), 119 to 139 (AGFI…AYII), 170 to 190 (RTLI…LALG), 195 to 215 (LVHT…TKYH), 237 to 257 (GCAA…LFAL), 267 to 287 (QLMW…RTAM), 320 to 340 (LLPM…FNQL), 361 to 381 (IIEA…LPLL), 451 to 471 (LLTF…TAVP), 474 to 494 (QFVP…MFVV), 508 to 528 (ALLG…SLCV), and 529 to 549 (IMVE…VLLI). CBS domains lie at 592 to 652 (QSQK…KVDF) and 704 to 761 (LNPS…SSAV). Residues 731 to 751 (HLFVVPRPSRVIGLITRKDLL) traverse the membrane as a helical segment.

This sequence belongs to the chloride channel (TC 2.A.49) family. Homodimer. In terms of tissue distribution, broadly expressed in the plant, but predominantly in the silique.

The protein localises to the membrane. In terms of biological role, voltage-gated chloride channel. In Arabidopsis thaliana (Mouse-ear cress), this protein is Chloride channel protein CLC-d (CLC-D).